A 616-amino-acid polypeptide reads, in one-letter code: Large ribosomal subunit assembly factor BipA (616 aa).

Positions 8 to 204 constitute a tr-type G domain; that stretch reads KKLRNIAIIA…AIVKHVEPPK (197 aa). GTP contacts are provided by residues 20–25 and 134–137; these read DHGKTT and NKVD.

This sequence belongs to the TRAFAC class translation factor GTPase superfamily. Classic translation factor GTPase family. BipA subfamily. In terms of assembly, monomer.

It localises to the cytoplasm. The enzyme catalyses GTP + H2O = GDP + phosphate + H(+). A 50S ribosomal subunit assembly protein with GTPase activity, required for 50S subunit assembly at low temperatures, may also play a role in translation. Binds GTP and analogs. Binds the 70S ribosome between the 30S and 50S subunits, in a similar position as ribosome-bound EF-G; it contacts a number of ribosomal proteins, both rRNAs and the A-site tRNA. This chain is Large ribosomal subunit assembly factor BipA, found in Haemophilus influenzae (strain ATCC 51907 / DSM 11121 / KW20 / Rd).